The sequence spans 277 residues: Ras suppressor protein 1 (277 aa).

A disordered region spans residues 1–23; sequence MSKSLKKLVEESREKNQPEVDMS. Position 2 is an N-acetylserine (Ser2). A compositionally biased stretch (basic and acidic residues) spans 7–23; sequence KLVEESREKNQPEVDMS. 7 LRR repeats span residues 41–63, 64–85, 87–108, 110–133, 135–156, 158–179, and 181–202; these read HITQ…AELK, NLEV…ISSL, KLKH…FGSS, LLEV…FFYL, TLRA…IGKL, KLQI…IGEL, and QLKE…LGNL. Residues 250–277 are disordered; the sequence is MQANPEPPKKNNDKSKKISRKPLAAKNK. Over residues 256–265 the composition is skewed to basic and acidic residues; the sequence is PPKKNNDKSK.

Potentially plays a role in the Ras signal transduction pathway. Capable of suppressing v-Ras transformation in vitro. The chain is Ras suppressor protein 1 (Rsu1) from Mus musculus (Mouse).